The primary structure comprises 901 residues: HTH-type transcriptional regulator MalT (901 aa).

39–46 (SPAGYGKT) is an ATP binding site. An HTH luxR-type domain is found at 829-894 (ELIRTSPLTQ…AAVQHAQKLL (66 aa)). The H-T-H motif DNA-binding region spans 853-872 (NEQIAGELEVAATTIKTHIR).

Belongs to the MalT family. Monomer in solution. Oligomerizes to an active state in the presence of the positive effectors ATP and maltotriose.

Its activity is regulated as follows. Activated by ATP and maltotriose, which are both required for DNA binding. In terms of biological role, positively regulates the transcription of the maltose regulon whose gene products are responsible for uptake and catabolism of malto-oligosaccharides. Specifically binds to the promoter region of its target genes, recognizing a short DNA motif called the MalT box. The polypeptide is HTH-type transcriptional regulator MalT (Escherichia coli O7:K1 (strain IAI39 / ExPEC)).